We begin with the raw amino-acid sequence, 513 residues long: Gluconokinase (513 aa).

ATP is bound by residues lysine 16, threonine 261, glycine 300, and 412–416 (GFARS).

This sequence belongs to the FGGY kinase family.

It carries out the reaction D-gluconate + ATP = 6-phospho-D-gluconate + ADP + H(+). It participates in carbohydrate acid metabolism; D-gluconate degradation. With respect to regulation, catabolite repression by gluconate. The polypeptide is Gluconokinase (gntK) (Bacillus subtilis (strain 168)).